We begin with the raw amino-acid sequence, 715 residues long: Fatty acid oxidation complex subunit alpha (715 aa).

The enoyl-CoA hydratase stretch occupies residues 1 to 190; that stretch reads MTTTSAFMLN…KAGLVDDVVP (190 aa). The interval 306–715 is 3-hydroxyacyl-CoA dehydrogenase; the sequence is GPLNSVGILG…WTNGETDQGN (410 aa).

This sequence in the N-terminal section; belongs to the enoyl-CoA hydratase/isomerase family. In the central section; belongs to the 3-hydroxyacyl-CoA dehydrogenase family. As to quaternary structure, heterotetramer of two alpha chains (FadJ) and two beta chains (FadI).

It localises to the cytoplasm. The enzyme catalyses a (3S)-3-hydroxyacyl-CoA = a (2E)-enoyl-CoA + H2O. The catalysed reaction is a 4-saturated-(3S)-3-hydroxyacyl-CoA = a (3E)-enoyl-CoA + H2O. It catalyses the reaction a (3S)-3-hydroxyacyl-CoA + NAD(+) = a 3-oxoacyl-CoA + NADH + H(+). It carries out the reaction (3S)-3-hydroxybutanoyl-CoA = (3R)-3-hydroxybutanoyl-CoA. It participates in lipid metabolism; fatty acid beta-oxidation. Functionally, catalyzes the formation of a hydroxyacyl-CoA by addition of water on enoyl-CoA. Also exhibits 3-hydroxyacyl-CoA epimerase and 3-hydroxyacyl-CoA dehydrogenase activities. The sequence is that of Fatty acid oxidation complex subunit alpha from Salmonella agona (strain SL483).